We begin with the raw amino-acid sequence, 232 residues long: MEVIRKTFFKKSRLEETSLEEIQLILASASPRRLALLAQIGLDPHQVYATNIDETPKLREHPANLAKRLAKEKALKAQETFLWRDQSSGEKVSAQKIVILAADTVVAVGRTILPSPESEDEAYECLRFLSGRAHKVYGAVCALNECGKITVKLVESCVRFRRLTSPMMEAYLYSGEWQGKAGGYAIQGKAGAFVVYIAGSYSNVVGLPLAETMDLLTAYHYPLLTHWNGKTH.

Catalysis depends on D103, which acts as the Proton acceptor.

It belongs to the Maf family. YhdE subfamily. It depends on a divalent metal cation as a cofactor.

It is found in the cytoplasm. It carries out the reaction dTTP + H2O = dTMP + diphosphate + H(+). The enzyme catalyses UTP + H2O = UMP + diphosphate + H(+). In terms of biological role, nucleoside triphosphate pyrophosphatase that hydrolyzes dTTP and UTP. May have a dual role in cell division arrest and in preventing the incorporation of modified nucleotides into cellular nucleic acids. In Bartonella henselae (strain ATCC 49882 / DSM 28221 / CCUG 30454 / Houston 1) (Rochalimaea henselae), this protein is dTTP/UTP pyrophosphatase.